The sequence spans 385 residues: tRNA pseudouridine synthase D (385 aa).

The active-site Nucleophile is the Asp65. In terms of domain architecture, TRUD spans 143–345 (GCENYFGEQR…SDGVRKAFFK (203 aa)).

The protein belongs to the pseudouridine synthase TruD family.

The enzyme catalyses uridine(13) in tRNA = pseudouridine(13) in tRNA. Functionally, responsible for synthesis of pseudouridine from uracil-13 in transfer RNAs. The protein is tRNA pseudouridine synthase D of Aquifex aeolicus (strain VF5).